Here is an 84-residue protein sequence, read N- to C-terminus: Putative defensin-like protein 114 (84 aa).

An N-terminal signal peptide occupies residues 1–24 (MAITKKCFAAFVLILLFVMPFVYC). 4 disulfide bridges follow: cysteine 41/cysteine 81, cysteine 47/cysteine 69, cysteine 54/cysteine 79, and cysteine 58/cysteine 80.

Belongs to the DEFL family.

The protein localises to the secreted. This Arabidopsis thaliana (Mouse-ear cress) protein is Putative defensin-like protein 114.